A 649-amino-acid chain; its full sequence is DNA topoisomerase 3 (649 aa).

In terms of domain architecture, Toprim spans 1 to 134 (MRLFIAEKPS…KRQQVRRCLI (134 aa)). 3 residues coordinate Mg(2+): glutamate 7, aspartate 103, and aspartate 105. A Topo IA-type catalytic domain is found at 155–603 (FVPLCVSALA…PLVGTLYQLI (449 aa)). Residues 194–199 (SVGRVQ) form an interaction with DNA region. Catalysis depends on tyrosine 328, which acts as the O-(5'-phospho-DNA)-tyrosine intermediate. Positions 614–649 (FRGIVAPGGGDKKKSAPRKRAGKKSPPAAETGRQTE) are disordered.

It belongs to the type IA topoisomerase family. Requires Mg(2+) as cofactor.

The catalysed reaction is ATP-independent breakage of single-stranded DNA, followed by passage and rejoining.. Releases the supercoiling and torsional tension of DNA, which is introduced during the DNA replication and transcription, by transiently cleaving and rejoining one strand of the DNA duplex. Introduces a single-strand break via transesterification at a target site in duplex DNA. The scissile phosphodiester is attacked by the catalytic tyrosine of the enzyme, resulting in the formation of a DNA-(5'-phosphotyrosyl)-enzyme intermediate and the expulsion of a 3'-OH DNA strand. The free DNA strand then undergoes passage around the unbroken strand, thus removing DNA supercoils. Finally, in the religation step, the DNA 3'-OH attacks the covalent intermediate to expel the active-site tyrosine and restore the DNA phosphodiester backbone. The sequence is that of DNA topoisomerase 3 from Salmonella typhimurium (strain LT2 / SGSC1412 / ATCC 700720).